We begin with the raw amino-acid sequence, 217 residues long: 3,4-dihydroxy-2-butanone 4-phosphate synthase (217 aa).

D-ribulose 5-phosphate-binding positions include 37–38 (RE), Asp42, 150–154 (RRGHT), and Glu174. Glu38 contacts Mg(2+). Residue His153 participates in Mg(2+) binding.

Belongs to the DHBP synthase family. As to quaternary structure, homodimer. Requires Mg(2+) as cofactor. Mn(2+) serves as cofactor.

The enzyme catalyses D-ribulose 5-phosphate = (2S)-2-hydroxy-3-oxobutyl phosphate + formate + H(+). It participates in cofactor biosynthesis; riboflavin biosynthesis; 2-hydroxy-3-oxobutyl phosphate from D-ribulose 5-phosphate: step 1/1. In terms of biological role, catalyzes the conversion of D-ribulose 5-phosphate to formate and 3,4-dihydroxy-2-butanone 4-phosphate. The polypeptide is 3,4-dihydroxy-2-butanone 4-phosphate synthase (Shewanella baltica (strain OS155 / ATCC BAA-1091)).